The following is a 474-amino-acid chain: UDP-N-acetylmuramoylalanine--D-glutamate ligase (474 aa).

Residue 134–140 (GSNGKST) coordinates ATP.

It belongs to the MurCDEF family.

Its subcellular location is the cytoplasm. It carries out the reaction UDP-N-acetyl-alpha-D-muramoyl-L-alanine + D-glutamate + ATP = UDP-N-acetyl-alpha-D-muramoyl-L-alanyl-D-glutamate + ADP + phosphate + H(+). It functions in the pathway cell wall biogenesis; peptidoglycan biosynthesis. In terms of biological role, cell wall formation. Catalyzes the addition of glutamate to the nucleotide precursor UDP-N-acetylmuramoyl-L-alanine (UMA). This is UDP-N-acetylmuramoylalanine--D-glutamate ligase from Thiobacillus denitrificans (strain ATCC 25259 / T1).